The primary structure comprises 414 residues: Eukaryotic initiation factor 4A-III-B (414 aa).

Positions 41-69 (PTFDTMGLREDLLRGIYAYGFEKPSAIQQ) match the Q motif motif. ATP is bound by residues Lys-63, Gln-68, 85 to 92 (SQSGTGKT), and 88 to 93 (GTGKTA). One can recognise a Helicase ATP-binding domain in the interval 72 to 242 (IKQIIKGRDV…NKFMTDPIRI (171 aa)). A DEAD box motif is present at residues 190–193 (DEAD). Residues 253-414 (GIKQFFVAVE…EMPMNVADLI (162 aa)) enclose the Helicase C-terminal domain. ATP-binding positions include Asp-345 and 370 to 374 (RSGRY).

This sequence belongs to the DEAD box helicase family. As to quaternary structure, identified in the spliceosome C complex. Part of the mRNA splicing-dependent exon junction complex (EJC) complex; the core complex contains casc3, eif4a3, magoh and rbm8a.

The protein resides in the nucleus. It localises to the nucleus speckle. The protein localises to the cytoplasm. The enzyme catalyses ATP + H2O = ADP + phosphate + H(+). Functionally, ATP-dependent RNA helicase. Involved in pre-mRNA splicing as component of the spliceosome. Core component of the splicing-dependent multiprotein exon junction complex (EJC) deposited at splice junctions on mRNAs. The EJC is a dynamic structure consisting of core proteins and several peripheral nuclear and cytoplasmic associated factors that join the complex only transiently either during EJC assembly or during subsequent mRNA metabolism. The EJC marks the position of the exon-exon junction in the mature mRNA for the gene expression machinery and the core components remain bound to spliced mRNAs throughout all stages of mRNA metabolism thereby influencing downstream processes including nuclear mRNA export, subcellular mRNA localization, translation efficiency and nonsense-mediated mRNA decay (NMD). Binds spliced mRNA in sequence-independent manner, 20-24 nucleotides upstream of mRNA exon-exon junctions. Involved in craniofacial development. When overexpressed, induces epidermis in dissociated cells that would otherwise adopt a neural fate, a process that requires an active BMP signaling pathway. The chain is Eukaryotic initiation factor 4A-III-B (eif4a3-b) from Xenopus laevis (African clawed frog).